A 424-amino-acid chain; its full sequence is UPF0229 protein Sde_0732 (424 aa).

A disordered region spans residues 52–109 (IGIPSKDISEPVFHHDSGGVDTRVLPGNDQFHSGDRIQRPPSGQGGGGSGKGASDSGE). Residues 58 to 69 (DISEPVFHHDSG) show a composition bias toward basic and acidic residues.

Belongs to the UPF0229 family.

The polypeptide is UPF0229 protein Sde_0732 (Saccharophagus degradans (strain 2-40 / ATCC 43961 / DSM 17024)).